The primary structure comprises 528 residues: GMP synthase [glutamine-hydrolyzing] (528 aa).

Residues 13-204 enclose the Glutamine amidotransferase type-1 domain; that stretch reads SILILDFGSQ…VYKISCCAAD (192 aa). The Nucleophile role is filled by cysteine 90. Catalysis depends on residues histidine 178 and glutamate 180. The GMPS ATP-PPase domain occupies 205 to 403; sequence WTTETYIEET…LGLPAEIIKR (199 aa). An ATP-binding site is contributed by 232-238; sequence SGGVDSS.

Homodimer.

The enzyme catalyses XMP + L-glutamine + ATP + H2O = GMP + L-glutamate + AMP + diphosphate + 2 H(+). Its pathway is purine metabolism; GMP biosynthesis; GMP from XMP (L-Gln route): step 1/1. Functionally, catalyzes the synthesis of GMP from XMP. The polypeptide is GMP synthase [glutamine-hydrolyzing] (Prochlorococcus marinus (strain MIT 9215)).